Consider the following 506-residue polypeptide: Maturase K (506 aa).

The protein belongs to the intron maturase 2 family. MatK subfamily.

The protein resides in the plastid. It is found in the chloroplast. Its function is as follows. Usually encoded in the trnK tRNA gene intron. Probably assists in splicing its own and other chloroplast group II introns. This is Maturase K from Trifolium subterraneum (Subterranean clover).